The primary structure comprises 520 residues: Nonsense-mediated mRNA decay factor SMG9 (520 aa).

A disordered region spans residues 1–143 (MSESGHSQPG…KGEKEGQRPT (143 aa)). S2 is modified (N-acetylserine). Phosphoserine occurs at positions 2, 4, 7, 32, and 53. A compositionally biased stretch (basic and acidic residues) spans 36–53 (GRERDYIAPWERERRDGS). Pro residues-rich tracts occupy residues 78–94 (QPPPSTAPAAPPAPAPL) and 122–133 (TAPPPPTAPAPP). S451 bears the Phosphoserine mark.

This sequence belongs to the SMG9 family. As to quaternary structure, self-associates to form homodimers and forms heterodimers with SMG8; these assembly forms may represent SMG1C intermediate forms. Component of the SMG1C complex composed of SMG1, SMG8 and SMG9. Interacts with DHX34; the interaction is RNA-independent. In terms of processing, phosphorylated by SMG1.

In terms of biological role, involved in nonsense-mediated decay (NMD) of mRNAs containing premature stop codons. Is recruited by release factors to stalled ribosomes together with SMG1 and SMG8 (forming the SMG1C protein kinase complex) and, in the SMG1C complex, is required for the efficient association between SMG1 and SMG8. Plays a role in brain, heart, and eye development. The sequence is that of Nonsense-mediated mRNA decay factor SMG9 from Mus musculus (Mouse).